The sequence spans 535 residues: WD repeat-containing protein 25 (535 aa).

Disordered regions lie at residues methionine 1–serine 108 and aspartate 141–glycine 160. The segment covering aspartate 141–serine 155 has biased composition (polar residues). WD repeat units follow at residues glycine 235–glutamine 277, valine 281–serine 320, glycine 321–glycine 362, alanine 365–asparagine 411, histidine 415–arginine 454, glycine 460–threonine 501, and glycine 504–histidine 535.

The protein is WD repeat-containing protein 25 (Wdr25) of Mus musculus (Mouse).